Here is a 172-residue protein sequence, read N- to C-terminus: Shikimate kinase (172 aa).

ATP is bound at residue 14-19 (GAGKTT). Residue Thr-18 participates in Mg(2+) binding. Substrate-binding residues include Asp-36, Arg-60, and Gly-82. Arg-119 provides a ligand contact to ATP. Arg-137 serves as a coordination point for substrate.

The protein belongs to the shikimate kinase family. Monomer. Requires Mg(2+) as cofactor.

Its subcellular location is the cytoplasm. It carries out the reaction shikimate + ATP = 3-phosphoshikimate + ADP + H(+). The protein operates within metabolic intermediate biosynthesis; chorismate biosynthesis; chorismate from D-erythrose 4-phosphate and phosphoenolpyruvate: step 5/7. In terms of biological role, catalyzes the specific phosphorylation of the 3-hydroxyl group of shikimic acid using ATP as a cosubstrate. The polypeptide is Shikimate kinase (Thermobifida fusca (strain YX)).